The following is a 276-amino-acid chain: NADPH-dependent 7-cyano-7-deazaguanine reductase (276 aa).

Residue 83-85 (IES) participates in substrate binding. NADPH is bound at residue 85–86 (SK). Cysteine 184 acts as the Thioimide intermediate in catalysis. Residue aspartate 191 is the Proton donor of the active site. 223 to 224 (HE) lines the substrate pocket. Residue 252-253 (RG) coordinates NADPH.

It belongs to the GTP cyclohydrolase I family. QueF type 2 subfamily. As to quaternary structure, homodimer.

It is found in the cytoplasm. It carries out the reaction 7-aminomethyl-7-carbaguanine + 2 NADP(+) = 7-cyano-7-deazaguanine + 2 NADPH + 3 H(+). Its pathway is tRNA modification; tRNA-queuosine biosynthesis. Its function is as follows. Catalyzes the NADPH-dependent reduction of 7-cyano-7-deazaguanine (preQ0) to 7-aminomethyl-7-deazaguanine (preQ1). The polypeptide is NADPH-dependent 7-cyano-7-deazaguanine reductase (Pseudomonas putida (strain W619)).